A 228-amino-acid polypeptide reads, in one-letter code: Glycerol-3-phosphate acyltransferase (228 aa).

The next 6 membrane-spanning stretches (helical) occupy residues 1–21 (MINW…LGAT), 56–76 (VPAL…IALV), 104–124 (MVII…WIGF), 136–156 (ILLA…IVVL), 161–181 (IVSL…FFTG), and 183–203 (PLPY…RHIS).

This sequence belongs to the PlsY family. In terms of assembly, probably interacts with PlsX.

The protein resides in the cell inner membrane. The enzyme catalyses an acyl phosphate + sn-glycerol 3-phosphate = a 1-acyl-sn-glycero-3-phosphate + phosphate. The protein operates within lipid metabolism; phospholipid metabolism. Functionally, catalyzes the transfer of an acyl group from acyl-phosphate (acyl-PO(4)) to glycerol-3-phosphate (G3P) to form lysophosphatidic acid (LPA). This enzyme utilizes acyl-phosphate as fatty acyl donor, but not acyl-CoA or acyl-ACP. The protein is Glycerol-3-phosphate acyltransferase of Trichodesmium erythraeum (strain IMS101).